A 299-amino-acid polypeptide reads, in one-letter code: Protoheme IX farnesyltransferase 1 (299 aa).

8 consecutive transmembrane segments (helical) span residues 25-45 (VVVL…RAGV), 47-67 (WTVL…AAAV), 95-115 (TGAL…LLTF), 119-139 (LTAW…TGFL), 147-167 (IVIG…AATG), 173-193 (PLLL…ALAI), 226-246 (ALLA…LYLI), and 279-299 (IWYL…LLNL).

Belongs to the UbiA prenyltransferase family. Protoheme IX farnesyltransferase subfamily.

It is found in the cell inner membrane. The enzyme catalyses heme b + (2E,6E)-farnesyl diphosphate + H2O = Fe(II)-heme o + diphosphate. It participates in porphyrin-containing compound metabolism; heme O biosynthesis; heme O from protoheme: step 1/1. In terms of biological role, converts heme B (protoheme IX) to heme O by substitution of the vinyl group on carbon 2 of heme B porphyrin ring with a hydroxyethyl farnesyl side group. This is Protoheme IX farnesyltransferase 1 from Pseudomonas fluorescens (strain Pf0-1).